Here is a 428-residue protein sequence, read N- to C-terminus: AA14 family lytic polysaccharide monooxygenase A (428 aa).

The N-terminal stretch at 1 to 21 (MLRSLPASLALVAAFASKASA) is a signal peptide. Residues Asn34 and Asn52 are each glycosylated (N-linked (GlcNAc...) asparagine). Cystine bridges form between Cys88-Cys112, Cys131-Cys158, Cys174-Cys179, Cys181-Cys203, and Cys223-Cys239. A glycan (N-linked (GlcNAc...) asparagine) is linked at Asn155. Disordered stretches follow at residues 216–239 (KPAV…PGNC) and 292–428 (SSGT…HNAH). Residues 223-232 (CGADPDHGKP) show a composition bias toward basic and acidic residues. Residue Asn238 is glycosylated (N-linked (GlcNAc...) asparagine). Residues 292–379 (SSGTGSSPTS…SVATEASSSP (88 aa)) show a composition bias toward low complexity. Residues 380–402 (IASTTVDEAVVSSSTVGSINPTR) show a composition bias toward polar residues. Over residues 414 to 428 (QKKKRKHARHLHNAH) the composition is skewed to basic residues.

Cu(2+) is required as a cofactor.

It localises to the secreted. Lytic polysaccharide monooxygenase (LPMO) showing oxidase and peroxidase activities that are common for LPMOs. Catalysis by LPMOs requires the reduction of the active-site copper from Cu(II) to Cu(I) by a reducing agent and H(2)O(2) or O(2) as a cosubstrate. Shows no activity on cellulose-associated xylan or any other tested polysaccharide substrate, meaning that the substrate rremains unknown. In Trametes coccinea (strain BRFM310) (Pycnoporus coccineus), this protein is AA14 family lytic polysaccharide monooxygenase A.